Here is a 623-residue protein sequence, read N- to C-terminus: V-type proton ATPase catalytic subunit A (623 aa).

252–259 lines the ATP pocket; the sequence is GAFGCGKT.

It belongs to the ATPase alpha/beta chains family. As to quaternary structure, V-ATPase is a heteromultimeric enzyme composed of a peripheral catalytic V1 complex (main components: subunits A, B, C, D, E, and F) attached to an integral membrane V0 proton pore complex (main component: the proteolipid protein).

The catalysed reaction is ATP + H2O + 4 H(+)(in) = ADP + phosphate + 5 H(+)(out). Functionally, catalytic subunit of the peripheral V1 complex of vacuolar ATPase. V-ATPase vacuolar ATPase is responsible for acidifying a variety of intracellular compartments in eukaryotic cells. In Citrus unshiu (Satsuma mandarin), this protein is V-type proton ATPase catalytic subunit A.